Reading from the N-terminus, the 231-residue chain is Aquaporin Z (231 aa).

Helical transmembrane passes span 11 to 31 (FLGTLWLVLGGCGSAVLAAAF) and 36 to 56 (IGLLGVSLAFGLTVLTMAFAI). The NPA 1 signature appears at 65-67 (NPA). The next 3 membrane-spanning stretches (helical) occupy residues 84 to 104 (LPYIIAQVAGGIAGAGVLYLI), 132 to 152 (MISVMICEIVMTLFFLLVILG), and 161 to 181 (GFAPIAIGLCLTLIHLISIPI). The NPA 2 signature appears at 187–189 (NPA). A helical membrane pass occupies residues 203–223 (VSQLWLFWAAPIIGAILAGVI).

This sequence belongs to the MIP/aquaporin (TC 1.A.8) family. Homotetramer.

Its subcellular location is the cell inner membrane. It carries out the reaction H2O(in) = H2O(out). Functionally, channel that permits osmotically driven movement of water in both directions. It is involved in the osmoregulation and in the maintenance of cell turgor during volume expansion in rapidly growing cells. It mediates rapid entry or exit of water in response to abrupt changes in osmolarity. This Shewanella oneidensis (strain ATCC 700550 / JCM 31522 / CIP 106686 / LMG 19005 / NCIMB 14063 / MR-1) protein is Aquaporin Z.